The sequence spans 534 residues: CTP synthase (534 aa).

The interval 1 to 266 is amidoligase domain; that stretch reads MKTKFLFITG…DERIIDYLNI (266 aa). Ser14 contacts CTP. Residue Ser14 participates in UTP binding. Residues 15–20 and Asp72 each bind ATP; that span reads SLGKGL. 2 residues coordinate Mg(2+): Asp72 and Glu140. CTP-binding positions include 147–149, 187–192, and Lys223; these read DIE and KTKPTQ. UTP is bound by residues 187–192 and Lys223; that span reads KTKPTQ. 239-241 contributes to the ATP binding site; sequence RDV. The Glutamine amidotransferase type-1 domain occupies 291–533; that stretch reads TIAIVGKYVE…VGASLKHHGE (243 aa). An L-glutamine-binding site is contributed by Gly353. The Nucleophile; for glutamine hydrolysis role is filled by Cys380. L-glutamine contacts are provided by residues 381-384, Glu404, and Arg461; that span reads LGMQ. Active-site residues include His506 and Glu508.

The protein belongs to the CTP synthase family. Homotetramer.

It catalyses the reaction UTP + L-glutamine + ATP + H2O = CTP + L-glutamate + ADP + phosphate + 2 H(+). It carries out the reaction L-glutamine + H2O = L-glutamate + NH4(+). The catalysed reaction is UTP + NH4(+) + ATP = CTP + ADP + phosphate + 2 H(+). Its pathway is pyrimidine metabolism; CTP biosynthesis via de novo pathway; CTP from UDP: step 2/2. Allosterically activated by GTP, when glutamine is the substrate; GTP has no effect on the reaction when ammonia is the substrate. The allosteric effector GTP functions by stabilizing the protein conformation that binds the tetrahedral intermediate(s) formed during glutamine hydrolysis. Inhibited by the product CTP, via allosteric rather than competitive inhibition. Functionally, catalyzes the ATP-dependent amination of UTP to CTP with either L-glutamine or ammonia as the source of nitrogen. Regulates intracellular CTP levels through interactions with the four ribonucleotide triphosphates. This is CTP synthase from Syntrophotalea carbinolica (strain DSM 2380 / NBRC 103641 / GraBd1) (Pelobacter carbinolicus).